The sequence spans 189 residues: Small ribosomal subunit protein uS5 (189 aa).

The S5 DRBM domain occupies Leu22 to Val85. The segment at Ser164–Val189 is disordered. Over residues Lys172 to Val189 the composition is skewed to basic and acidic residues.

Belongs to the universal ribosomal protein uS5 family. In terms of assembly, part of the 30S ribosomal subunit. Contacts proteins S4 and S8.

In terms of biological role, with S4 and S12 plays an important role in translational accuracy. Located at the back of the 30S subunit body where it stabilizes the conformation of the head with respect to the body. This chain is Small ribosomal subunit protein uS5, found in Acidiphilium cryptum (strain JF-5).